The sequence spans 116 residues: PTS system galactose-specific EIIA component (116 aa).

One can recognise a PTS EIIA type-3 domain in the interval aspartate 11 to arginine 109. The Tele-phosphohistidine intermediate role is filled by histidine 85. Histidine 85 carries the post-translational modification Phosphohistidine; by HPr. Aspartate 88 is a Mg(2+) binding site.

Homotrimer. The cofactor is Mg(2+).

Functionally, the phosphoenolpyruvate-dependent sugar phosphotransferase system (sugar PTS), a major carbohydrate active transport system, catalyzes the phosphorylation of incoming sugar substrates concomitantly with their translocation across the cell membrane. Involved in galactose transport with PtcB and Lmg_0963. In Lactococcus lactis subsp. cremoris (strain MG1363), this protein is PTS system galactose-specific EIIA component.